The sequence spans 405 residues: Formate-dependent phosphoribosylglycinamide formyltransferase (405 aa).

N(1)-(5-phospho-beta-D-ribosyl)glycinamide contacts are provided by residues 22–23 (EL) and Glu82. Residues Arg115, Lys162, 167–172 (SSGKGQ), 202–205 (EGFI), and Glu210 each bind ATP. Positions 120 to 320 (RLAAETLGLA…EFELHARAIL (201 aa)) constitute an ATP-grasp domain. 2 residues coordinate Mg(2+): Glu279 and Glu291. Residues Asp298, Lys367, and 374–375 (RR) each bind N(1)-(5-phospho-beta-D-ribosyl)glycinamide.

The protein belongs to the PurK/PurT family. Homodimer.

The enzyme catalyses N(1)-(5-phospho-beta-D-ribosyl)glycinamide + formate + ATP = N(2)-formyl-N(1)-(5-phospho-beta-D-ribosyl)glycinamide + ADP + phosphate + H(+). It functions in the pathway purine metabolism; IMP biosynthesis via de novo pathway; N(2)-formyl-N(1)-(5-phospho-D-ribosyl)glycinamide from N(1)-(5-phospho-D-ribosyl)glycinamide (formate route): step 1/1. In terms of biological role, involved in the de novo purine biosynthesis. Catalyzes the transfer of formate to 5-phospho-ribosyl-glycinamide (GAR), producing 5-phospho-ribosyl-N-formylglycinamide (FGAR). Formate is provided by PurU via hydrolysis of 10-formyl-tetrahydrofolate. This chain is Formate-dependent phosphoribosylglycinamide formyltransferase, found in Delftia acidovorans (strain DSM 14801 / SPH-1).